Here is a 1177-residue protein sequence, read N- to C-terminus: MAQTTLDDWAKDPVDPEIRAHVHSLITALGGIGDDGTYSLGDDALLCLKDLRKWLKFGDGQLNRRDVARCMAEANLVKGDLLEILAKISPKAIEDKWRHKIAVAALELLVPLTWPFEIDPIEATVNHHRHGPYIQLAQIGYKRAILQFDRDRTLQTAVKIALPSMAVPLRERTPRDEGIIRIALYFIRNIAMLSPPTSAPMDIDEAEVSRSATIDTFHEQDIFQVLLSVASSIGEDFVAQDVIVLEILFFLLKGIDAEKLFMEDKKLGTKNADELKNLMQKEKAMLAGYARNAPTRHNRFGTMIWVKRDDEKVTTISGQDVLGKAQASMQKMDQTKKWNKPRRPGKKVDGEQEREEFDLPVALTVSARKHIKAFVEEFLDSSFNPLFLHLRKAIERETERVEIRHSRQFFYLASWFLRAECARRRTMKERAADPKDPAVLTAEDESYGLVAEVMNQETFILLNRFMQKSQDEKAWQDLNAGMKCFTQILLTVHEMSESALEDDQEIAENIQNRIFYEESTHDRVVMILRSYNGQGFGYLDAVTELSHVFLRMLERYAKQNVDLQVKSKRRARKIKKKVAETHGANGDEEGQVSDTEDIQQAQRTVSERKFDFQRFAAKFVNQSSVDTFVAFARYFSDLDTEQLKRIHRFFHRVAFKMELGVLLCRVDILQLFTKMMKGPGGLDPESPAYKEWDEFVRHFFRQVVKKVQERPELVVEMLFSKIPATLFFLDHGYDREITKSTPRAPAELEVKPGMEVPEQIGVAVGVLINQAKSDALHWVRDILISAAEERKAWEGAEEARKALAAAERPAGEEVAENTEEESPKPPSILVKPDSEERRLAMFKDNKLRLLMTLVGFSRLGEAHDPDATWIIPSAFTSTDLEFAIDLLRKYEFDPPTYEDGKGPEDLIRNKASAARRSTRRVDFDDDDEEAENAVEEDHGEYRAGKATERKPDGERKKLKRRQRVGTPVELDDEEKDRRAEARRKKELEKFAKQKSTEFVHDSDEEDDDDKDMEFFRREEALRTEIMKAFGKSLTAGSTETATSKKRKAEDSTSRTKRRKTPPKRKAQPFADSDDSDEDVQDAATPSSRAPSLSARDMIHDESEVEDEATDTPLSSQHANGVHESDEDTTTGATASITVKSQDVVMADDDDEEDEATPVARRPMARKRGAFIVDSDSE.

Disordered stretches follow at residues 332-353, 576-598, 802-830, 893-1012, and 1028-1177; these read MDQT…GEQE, KKVA…TEDI, ALAA…SILV, DPPT…DKDM, and AFGK…SDSE. The segment covering 586–597 has biased composition (acidic residues); it reads GDEEGQVSDTED. The segment covering 893–908 has biased composition (basic and acidic residues); sequence DPPTYEDGKGPEDLIR. Residues 923–934 show a composition bias toward acidic residues; the sequence is FDDDDEEAENAV. Basic and acidic residues-rich tracts occupy residues 935 to 955 and 975 to 1001; these read EEDH…DGER and KDRR…FVHD. Over residues 1002–1011 the composition is skewed to acidic residues; sequence SDEEDDDDKD. The span at 1054–1066 shows a compositional bias: basic residues; sequence RTKRRKTPPKRKA. Positions 1071–1080 are enriched in acidic residues; the sequence is DSDDSDEDVQ. Residues 1129–1140 are compositionally biased toward polar residues; the sequence is TTGATASITVKS. The segment covering 1145 to 1155 has biased composition (acidic residues); that stretch reads MADDDDEEDEA.

This sequence belongs to the timeless family. In terms of assembly, component of the fork protection complex (FPC) consisting of TOF1 and CSM3.

It is found in the nucleus. In terms of biological role, forms a fork protection complex (FPC) with CSM3 and which is required for chromosome segregation during meiosis and DNA damage repair. FPC coordinates leading and lagging strand synthesis and moves with the replication fork. FPC stabilizes replication forks in a configuration that is recognized by replication checkpoint sensors. The chain is Topoisomerase 1-associated factor 1 (TOF1) from Phaeosphaeria nodorum (strain SN15 / ATCC MYA-4574 / FGSC 10173) (Glume blotch fungus).